We begin with the raw amino-acid sequence, 591 residues long: L-lactate dehydrogenase (cytochrome) (591 aa).

Residues 1-80 (MLKYKPLLKI…LNWHNGQIDN (80 aa)) constitute a mitochondrion transit peptide. The 78-residue stretch at 88-165 (KQKISPAEVA…APEKKLGPLQ (78 aa)) folds into the Cytochrome b5 heme-binding domain. Heme b contacts are provided by H123, H146, Y177, Q219, and Y223. Residues 197–563 (PPLDNIINLY…KPDLLDLSTL (367 aa)) enclose the FMN hydroxy acid dehydrogenase domain. Y223 contacts pyruvate. Residues 275-278 (SATA), S308, and Q332 each bind FMN. Residue Y334 participates in pyruvate binding. Position 360 (T360) interacts with FMN. K376 contributes to the heme b binding site. K429 provides a ligand contact to FMN. Pyruvate-binding residues include H453 and R456. H453 (proton acceptor) is an active-site residue. FMN is bound by residues 489–493 (DGGVR) and 512–513 (GR).

The protein in the N-terminal section; belongs to the cytochrome b5 family. In the C-terminal section; belongs to the FMN-dependent alpha-hydroxy acid dehydrogenase family. Homotetramer. The cofactor is FMN. It depends on heme b as a cofactor.

It localises to the mitochondrion intermembrane space. It carries out the reaction (S)-lactate + 2 Fe(III)-[cytochrome c] = 2 Fe(II)-[cytochrome c] + pyruvate + 2 H(+). In terms of biological role, catalyzes the oxidation of (S)-lactate (L-lactate) to pyruvate with subsequent transfer of electrons to cytochrome c. Is involved in the utilization of (S)-lactate as a sole source of carbon for growth. Can also use ferricyanide as an electron acceptor in vitro. The sequence is that of L-lactate dehydrogenase (cytochrome) (CYB2) from Saccharomyces cerevisiae (strain ATCC 204508 / S288c) (Baker's yeast).